Consider the following 465-residue polypeptide: UPF0324 membrane protein CC_0425 (465 aa).

The segment at 97 to 132 (HRQPDRAPPARASEQPLRQGRRALRRRPDQRRHRPR) is disordered. Over residues 115–132 (QGRRALRRRPDQRRHRPR) the composition is skewed to basic residues. 10 helical membrane-spanning segments follow: residues 135–157 (AAAL…LMAV), 172–194 (LLAV…GAGL), 219–241 (AALG…GIGA), 251–273 (LAEA…LAAS), 286–308 (TALV…PPIA), 318–340 (AGVF…ASVS), 352–374 (LSRI…RTAQ), 378–400 (ISGL…ARGL), 405–427 (PALV…GAIS), and 442–464 (LAIL…TRIF).

Belongs to the UPF0324 family.

The protein resides in the cell membrane. In Caulobacter vibrioides (strain ATCC 19089 / CIP 103742 / CB 15) (Caulobacter crescentus), this protein is UPF0324 membrane protein CC_0425.